Consider the following 116-residue polypeptide: MRSAMLFAAVLALSLAWTFGAACEEPQEQGGRLSKDSDLSLLPPPLLRRLYDSRSISLEGLLKVLSKASVGPKETSLPQKRDMHDFFVGLMGKRNSQPDTPADVVEENTPSFGVLK.

The first 20 residues, 1-20, serve as a signal peptide directing secretion; that stretch reads MRSAMLFAAVLALSLAWTFG. The propeptide occupies 21-79; that stretch reads AACEEPQEQGGRLSKDSDLSLLPPPLLRRLYDSRSISLEGLLKVLSKASVGPKETSLPQ. Met-91 is modified (methionine amide). The segment at 92–116 is disordered; it reads GKRNSQPDTPADVVEENTPSFGVLK. The propeptide occupies 95–116; it reads NSQPDTPADVVEENTPSFGVLK.

The protein belongs to the tachykinin family.

The protein resides in the secreted. Functionally, tachykinins are active peptides which excite neurons, evoke behavioral responses, are potent vasodilators and secretagogues, and contract (directly or indirectly) many smooth muscles. Is a critical central regulator of gonadal function. This Rattus norvegicus (Rat) protein is Tachykinin-3 (Tac3).